The sequence spans 354 residues: MDLPVLPPVSPMLSKSVNQIPPGMSYEPKWDGFRSILFRDGAEVELGSRKERPMTRYFPELVAAALTELPDRCVIDGEIVLPADNHLDFEALQLRLHPAASRVAMLAEQTPAAFIAFDLLALGDDDYTGRPFSERRAALETALADAGPTFHLTPATTDLPTAQRWFHEFEGAGLDGVIAKPLDLTYQPDKRVMFKVKHQRTADCVVAGYRLHKSGADAVGSLLLGLYDDDGSLASVGVIGAFPMATRRALFTELQTLVADFDHHPWNWAAQAAADPELARRYGGGSRWNAGKDLSFVPLRPERLVEVRYDHMEGRRFRHTAQFNRWRPDRDARSCTFAQLDSPPHSSSVTSCRV.

Lys29 serves as the catalytic N6-AMP-lysine intermediate.

The protein belongs to the ATP-dependent DNA ligase family.

It catalyses the reaction ATP + (deoxyribonucleotide)n-3'-hydroxyl + 5'-phospho-(deoxyribonucleotide)m = (deoxyribonucleotide)n+m + AMP + diphosphate.. In terms of biological role, DNA ligase that seals nicks in double-stranded DNA during DNA replication, DNA recombination and DNA repair. Has weak intrinsic nick joining activities and accumulates DNA-adenylate. Acts as a backup for LigD in the Ku-LigD-dependent NHEJ pathway. The sequence is that of DNA ligase C2 (ligC2) from Mycolicibacterium smegmatis (strain ATCC 700084 / mc(2)155) (Mycobacterium smegmatis).